We begin with the raw amino-acid sequence, 455 residues long: Bifunctional protein GlmU (455 aa).

The interval 1 to 227 (MKLKAIILAA…YEEIMAVNSR (227 aa)) is pyrophosphorylase. UDP-N-acetyl-alpha-D-glucosamine contacts are provided by residues 8-11 (LAAG), Lys22, Gln72, and 77-78 (GT). Asp100 is a Mg(2+) binding site. UDP-N-acetyl-alpha-D-glucosamine contacts are provided by Gly137, Glu152, Asn167, and Asn225. Residue Asn225 participates in Mg(2+) binding. Residues 228-248 (EQLADVEAIMRRRIAKKHMAN) form a linker region. An N-acetyltransferase region spans residues 249–455 (GVTIMNPEHV…WTKRKGLLKK (207 aa)). Positions 330 and 348 each coordinate UDP-N-acetyl-alpha-D-glucosamine. Residue His360 is the Proton acceptor of the active site. Residues Tyr363 and Asn374 each coordinate UDP-N-acetyl-alpha-D-glucosamine. Residues 383 to 384 (NY), Ser402, Cys420, and Arg437 each bind acetyl-CoA.

In the N-terminal section; belongs to the N-acetylglucosamine-1-phosphate uridyltransferase family. This sequence in the C-terminal section; belongs to the transferase hexapeptide repeat family. As to quaternary structure, homotrimer. Mg(2+) serves as cofactor.

Its subcellular location is the cytoplasm. The catalysed reaction is alpha-D-glucosamine 1-phosphate + acetyl-CoA = N-acetyl-alpha-D-glucosamine 1-phosphate + CoA + H(+). The enzyme catalyses N-acetyl-alpha-D-glucosamine 1-phosphate + UTP + H(+) = UDP-N-acetyl-alpha-D-glucosamine + diphosphate. The protein operates within nucleotide-sugar biosynthesis; UDP-N-acetyl-alpha-D-glucosamine biosynthesis; N-acetyl-alpha-D-glucosamine 1-phosphate from alpha-D-glucosamine 6-phosphate (route II): step 2/2. Its pathway is nucleotide-sugar biosynthesis; UDP-N-acetyl-alpha-D-glucosamine biosynthesis; UDP-N-acetyl-alpha-D-glucosamine from N-acetyl-alpha-D-glucosamine 1-phosphate: step 1/1. It participates in bacterial outer membrane biogenesis; LPS lipid A biosynthesis. In terms of biological role, catalyzes the last two sequential reactions in the de novo biosynthetic pathway for UDP-N-acetylglucosamine (UDP-GlcNAc). The C-terminal domain catalyzes the transfer of acetyl group from acetyl coenzyme A to glucosamine-1-phosphate (GlcN-1-P) to produce N-acetylglucosamine-1-phosphate (GlcNAc-1-P), which is converted into UDP-GlcNAc by the transfer of uridine 5-monophosphate (from uridine 5-triphosphate), a reaction catalyzed by the N-terminal domain. The chain is Bifunctional protein GlmU from Alkaliphilus oremlandii (strain OhILAs) (Clostridium oremlandii (strain OhILAs)).